We begin with the raw amino-acid sequence, 185 residues long: MSRKVVQPPSLRIIPPLNFCPVEKQLYRSGQPSIINQSFLQDLNLKTIIWLASEEPQEEFLDYCSMNSINIEFVGMINDDYSYQNVNPWDSLNETTIKKALELICDRNNYPMLVCCGMGRHRTGTVIGCLRRLQGWNLASVSEEYRRFTGARGGRILVELLIEGFDISTVEIGSGKGSSMARKKR.

Positions 18-178 (NFCPVEKQLY…TVEIGSGKGS (161 aa)) constitute a Tyrosine-protein phosphatase domain. The active-site Phosphocysteine intermediate is cysteine 116.

The protein belongs to the protein-tyrosine phosphatase family.

It is found in the cytoplasm. It catalyses the reaction O-phospho-L-tyrosyl-[protein] + H2O = L-tyrosyl-[protein] + phosphate. Putative tyrosine-protein phosphatase required for protection against superoxide stress. The polypeptide is Putative tyrosine-protein phosphatase OCA1 (OCA1) (Meyerozyma guilliermondii (strain ATCC 6260 / CBS 566 / DSM 6381 / JCM 1539 / NBRC 10279 / NRRL Y-324) (Yeast)).